We begin with the raw amino-acid sequence, 205 residues long: Holliday junction branch migration complex subunit RuvA (205 aa).

The domain I stretch occupies residues 1–63 (MIDFVEGTLS…EDAILLYGFA (63 aa)). A domain II region spans residues 64–142 (TRDERDLFRK…GYTPSAILTV (79 aa)). The segment at 143 to 153 (AAGDLTAGEQA) is flexible linker. The segment at 153-205 (AVSALNEALDALTALGYSDGELQKIRNTLSEKSKEGDGVEKLIKQGLALLMRG) is domain III.

This sequence belongs to the RuvA family. As to quaternary structure, homotetramer. Forms an RuvA(8)-RuvB(12)-Holliday junction (HJ) complex. HJ DNA is sandwiched between 2 RuvA tetramers; dsDNA enters through RuvA and exits via RuvB. An RuvB hexamer assembles on each DNA strand where it exits the tetramer. Each RuvB hexamer is contacted by two RuvA subunits (via domain III) on 2 adjacent RuvB subunits; this complex drives branch migration. In the full resolvosome a probable DNA-RuvA(4)-RuvB(12)-RuvC(2) complex forms which resolves the HJ.

It is found in the cytoplasm. Its function is as follows. The RuvA-RuvB-RuvC complex processes Holliday junction (HJ) DNA during genetic recombination and DNA repair, while the RuvA-RuvB complex plays an important role in the rescue of blocked DNA replication forks via replication fork reversal (RFR). RuvA specifically binds to HJ cruciform DNA, conferring on it an open structure. The RuvB hexamer acts as an ATP-dependent pump, pulling dsDNA into and through the RuvAB complex. HJ branch migration allows RuvC to scan DNA until it finds its consensus sequence, where it cleaves and resolves the cruciform DNA. The chain is Holliday junction branch migration complex subunit RuvA from Brevibacillus brevis (strain 47 / JCM 6285 / NBRC 100599).